The sequence spans 87 residues: Large ribosomal subunit protein bL27 (87 aa).

Positions 1 to 21 are disordered; it reads MAHKKAGGSSRNGRDSESKRL.

Belongs to the bacterial ribosomal protein bL27 family.

The protein is Large ribosomal subunit protein bL27 of Aromatoleum aromaticum (strain DSM 19018 / LMG 30748 / EbN1) (Azoarcus sp. (strain EbN1)).